Reading from the N-terminus, the 221-residue chain is Small ribosomal subunit protein uS3 (221 aa).

Positions 39–108 (IRKFVKKRSY…NVIINIVEVK (70 aa)) constitute a KH type-2 domain.

Belongs to the universal ribosomal protein uS3 family. In terms of assembly, part of the 30S ribosomal subunit. Forms a tight complex with proteins S10 and S14.

Its function is as follows. Binds the lower part of the 30S subunit head. Binds mRNA in the 70S ribosome, positioning it for translation. This Clostridium novyi (strain NT) protein is Small ribosomal subunit protein uS3.